We begin with the raw amino-acid sequence, 304 residues long: Non-specific ribonucleoside hydrolase RihC (304 aa).

Histidine 233 is a catalytic residue.

This sequence belongs to the IUNH family. RihC subfamily.

Hydrolyzes both purine and pyrimidine ribonucleosides with a broad-substrate specificity. The polypeptide is Non-specific ribonucleoside hydrolase RihC (Escherichia coli O45:K1 (strain S88 / ExPEC)).